Here is a 354-residue protein sequence, read N- to C-terminus: MGNCLSSSDQKEAKDRSVAIDKQIEQDSRQFKKECKILLLGSGESGKSTIVKQMKIIHQNGYSKDELLLYRLTVIKNLVDSAQAIVLALRKFKMEPEMPENRENVDVILQYRVDADPGATLDHPMARKVDSLWKDPIIPAIMERSSEFYLMDSAAYFFDNVNRIGQADYVPDENDVLRARSKTTGISETRFNMGQLSIHLFDVGGQRSERKKWIHCFEAVTSIIFCVALSEYDQVLLEESGQNRMAESLVLFESVVNSRWFLRTSVILFLNKIDIFKQKIPKQPLSKYFPEYSGGPDINKAAKYILWRFTQTNRARLSIYPHLTQATDTSNIRLVFAAVKETILTNALKDSGIL.

Residue glycine 2 is the site of N-myristoyl glycine attachment. Residue cysteine 4 is the site of S-palmitoyl cysteine attachment. Residues 33–354 (KECKILLLGS…TNALKDSGIL (322 aa)) enclose the G-alpha domain. The G1 motif stretch occupies residues 36–49 (KILLLGSGESGKST). GTP-binding positions include 41–48 (GSGESGKS), 177–183 (LRARSKT), 202–206 (DVGGQ), 271–274 (NKID), and alanine 326. Mg(2+) is bound by residues serine 48 and threonine 183. Residues 175-183 (DVLRARSKT) form a G2 motif region. Residues 198 to 207 (IHLFDVGGQR) form a G3 motif region. The G4 motif stretch occupies residues 267 to 274 (ILFLNKID). A G5 motif region spans residues 324–329 (TQATDT).

The protein belongs to the G-alpha family. In terms of assembly, g proteins are composed of 3 units; alpha, beta and gamma. The alpha chain contains the guanine nucleotide binding site.

Guanine nucleotide-binding proteins (G proteins) are involved as modulators or transducers in various transmembrane signaling systems. This subunit is involved in cAMP regulation and morphogenesis. It is essential for dimorphic switching in haploid cells. The protein is Guanine nucleotide-binding protein alpha-3 subunit (FIL1) of Ustilago hordei (Barley covered smut fungus).